Here is an 86-residue protein sequence, read N- to C-terminus: Muscarinic toxin 7 (86 aa).

The signal sequence occupies residues methionine 1 to threonine 21. Finger loop regions lie at residues threonine 23–aspartate 37, leucine 44–cysteine 63, and threonine 66–cysteine 78. 4 disulfide bridges follow: cysteine 24–cysteine 45, cysteine 38–cysteine 63, cysteine 67–cysteine 78, and cysteine 79–cysteine 84.

It belongs to the three-finger toxin family. Short-chain subfamily. Aminergic toxin sub-subfamily. Expressed by the venom gland.

The protein resides in the secreted. Its function is as follows. Binds specifically and irreversibly to an allosteric site of the muscarinic acetylcholine M1 receptor (CHRM1) at subnanomolar concentrations and shows a very slow dissociation rate. It also inhibits agonist-mediated guanosine 5'-O-(3'-thiotriphosphate) (GTP-g-S) binding and downstream signaling, and decreases the dissociation rate of orthosteric antagonists (N-methylscopolamine (NMS) or pirenzepine). Is a potent negative allosteric modulator (NAM) for CHRM1 activation and a positive allosteric modulator (PAM) for antagonist binding. The chain is Muscarinic toxin 7 from Dendroaspis angusticeps (Eastern green mamba).